Here is a 433-residue protein sequence, read N- to C-terminus: Xylose isomerase (433 aa).

Residues histidine 99 and aspartate 102 contribute to the active site. Mg(2+) contacts are provided by glutamate 230, glutamate 266, histidine 269, aspartate 294, aspartate 305, aspartate 307, and aspartate 337.

This sequence belongs to the xylose isomerase family. In terms of assembly, homotetramer. It depends on Mg(2+) as a cofactor.

The protein resides in the cytoplasm. It catalyses the reaction alpha-D-xylose = alpha-D-xylulofuranose. The protein is Xylose isomerase of Roseobacter denitrificans (strain ATCC 33942 / OCh 114) (Erythrobacter sp. (strain OCh 114)).